Reading from the N-terminus, the 392-residue chain is Protein O-glucosyltransferase 1 (392 aa).

An N-terminal signal peptide occupies residues 1–23; sequence MEWWASSPLRLWLLLFLLPSAQG. 2 N-linked (GlcNAc...) asparagine glycosylation sites follow: Asn40 and Asn53. 4 disulfide bridges follow: Cys49–Cys56, Cys54–Cys357, Cys102–Cys108, and Cys263–Cys286. Residues 103 to 107 form an interaction with the consensus sequence C-X-S-X-[PA]-C in peptide substrates region; that stretch reads MFPSR. Asp133 serves as the catalytic Proton donor/acceptor. An interaction with the consensus sequence C-X-S-X-[PA]-C in peptide substrates region spans residues 172 to 178; the sequence is AVWPIYP. Tyr177 contributes to the UDP-alpha-D-glucose binding site. Asn204 carries N-linked (GlcNAc...) asparagine glycosylation. Residues Ser212, Arg218, and 274 to 279 contribute to the UDP-alpha-D-glucose site; that span reads VAASFR. An N-linked (GlcNAc...) asparagine glycan is attached at Asn373. A Prevents secretion from ER motif is present at residues 389–392; sequence KTEL.

The protein belongs to the glycosyltransferase 90 family. In terms of tissue distribution, expressed in most adult tissues at different intensities. Abundantly expressed in liver. Expressed also in brain, heart, skeletal muscle, spleen, kidney, placenta, lung and peripheral blood leukocyte. Not detectable in colon, thymus and small intestine. Expressed in the epidermis, especially in the upper parts, stratum spinosum and stratum granulosum (at protein level).

Its subcellular location is the endoplasmic reticulum lumen. It catalyses the reaction L-seryl-[EGF-like domain protein] + UDP-alpha-D-xylose = 3-O-(beta-D-xylosyl)-L-seryl-[EGF-like domain protein] + UDP + H(+). The enzyme catalyses L-seryl-[EGF-like domain protein] + UDP-alpha-D-glucose = 3-O-(beta-D-glucosyl)-L-seryl-[EGF-like domain protein] + UDP + H(+). It functions in the pathway protein modification; protein glycosylation. Functionally, dual specificity glycosyltransferase that catalyzes the transfer of glucose and xylose from UDP-glucose and UDP-xylose, respectively, to a serine residue found in the consensus sequence of C-X-S-X-P-C. Specifically targets extracellular EGF repeats of protein such as CRB2, F7, F9 and NOTCH2. Acts as a positive regulator of Notch signaling by mediating O-glucosylation of Notch, leading to regulate muscle development. Notch glucosylation does not affect Notch ligand binding. Required during early development to promote gastrulation: acts by mediating O-glucosylation of CRB2, which is required for CRB2 localization to the cell membrane. The sequence is that of Protein O-glucosyltransferase 1 from Homo sapiens (Human).